Here is a 453-residue protein sequence, read N- to C-terminus: tRNA modification GTPase MnmE (453 aa).

The (6S)-5-formyl-5,6,7,8-tetrahydrofolate site is built by Arg-22, Glu-79, and Lys-119. The 162-residue stretch at 215 to 376 folds into the TrmE-type G domain; the sequence is GMKVVIAGRP…LQQHLKSLMG (162 aa). Asn-225 lines the K(+) pocket. Residues 225 to 230, 244 to 250, 269 to 272, and 334 to 337 each bind GTP; these read NAGKSS, TEIAGTT, DTAG, and NKAD. Ser-229 contributes to the Mg(2+) binding site. K(+)-binding residues include Thr-244, Ile-246, and Thr-249. Thr-250 serves as a coordination point for Mg(2+). Residue Lys-453 coordinates (6S)-5-formyl-5,6,7,8-tetrahydrofolate.

Belongs to the TRAFAC class TrmE-Era-EngA-EngB-Septin-like GTPase superfamily. TrmE GTPase family. As to quaternary structure, homodimer. Heterotetramer of two MnmE and two MnmG subunits. It depends on K(+) as a cofactor.

It is found in the cytoplasm. Its function is as follows. Exhibits a very high intrinsic GTPase hydrolysis rate. Involved in the addition of a carboxymethylaminomethyl (cmnm) group at the wobble position (U34) of certain tRNAs, forming tRNA-cmnm(5)s(2)U34. This is tRNA modification GTPase MnmE from Shewanella sediminis (strain HAW-EB3).